The following is a 282-amino-acid chain: NADPH-dependent 7-cyano-7-deazaguanine reductase (282 aa).

A substrate-binding site is contributed by 88-90 (IES). 90-91 (SK) contributes to the NADPH binding site. The active-site Thioimide intermediate is the Cys-190. The Proton donor role is filled by Asp-197. 229–230 (HE) contributes to the substrate binding site. 258–259 (RG) provides a ligand contact to NADPH.

The protein belongs to the GTP cyclohydrolase I family. QueF type 2 subfamily. Homodimer.

It localises to the cytoplasm. The enzyme catalyses 7-aminomethyl-7-carbaguanine + 2 NADP(+) = 7-cyano-7-deazaguanine + 2 NADPH + 3 H(+). It functions in the pathway tRNA modification; tRNA-queuosine biosynthesis. Functionally, catalyzes the NADPH-dependent reduction of 7-cyano-7-deazaguanine (preQ0) to 7-aminomethyl-7-deazaguanine (preQ1). The sequence is that of NADPH-dependent 7-cyano-7-deazaguanine reductase from Pectobacterium carotovorum subsp. carotovorum (strain PC1).